We begin with the raw amino-acid sequence, 100 residues long: ATP phosphoribosyltransferase (100 aa).

It belongs to the ATP phosphoribosyltransferase family. Long subfamily. In terms of assembly, equilibrium between an active dimeric form, an inactive hexameric form and higher aggregates. Interconversion between the various forms is largely reversible and is influenced by the natural substrates and inhibitors of the enzyme. The cofactor is Mg(2+).

It is found in the cytoplasm. The enzyme catalyses 1-(5-phospho-beta-D-ribosyl)-ATP + diphosphate = 5-phospho-alpha-D-ribose 1-diphosphate + ATP. It functions in the pathway amino-acid biosynthesis; L-histidine biosynthesis; L-histidine from 5-phospho-alpha-D-ribose 1-diphosphate: step 1/9. Feedback inhibited by histidine. Catalyzes the condensation of ATP and 5-phosphoribose 1-diphosphate to form N'-(5'-phosphoribosyl)-ATP (PR-ATP). Has a crucial role in the pathway because the rate of histidine biosynthesis seems to be controlled primarily by regulation of HisG enzymatic activity. This is ATP phosphoribosyltransferase (hisG) from Klebsiella pneumoniae.